The chain runs to 375 residues: Flagellar P-ring protein (375 aa).

The first 23 residues, methionine 1 to alanine 23, serve as a signal peptide directing secretion.

It belongs to the FlgI family. The basal body constitutes a major portion of the flagellar organelle and consists of four rings (L,P,S, and M) mounted on a central rod.

Its subcellular location is the bacterial flagellum basal body. Assembles around the rod to form the L-ring and probably protects the motor/basal body from shearing forces during rotation. The sequence is that of Flagellar P-ring protein from Buchnera aphidicola subsp. Baizongia pistaciae (strain Bp).